The primary structure comprises 692 residues: Ino eighty subunit 1 (692 aa).

The span at 1–25 (MGKRVYDPIHDTFQLREDNSDETKA) shows a compositional bias: basic and acidic residues. The disordered stretch occupies residues 1-133 (MGKRVYDPIH…RHLKKPDGEP (133 aa)). The residue at position 27 (S27) is a Phosphoserine. A compositionally biased stretch (polar residues) spans 28–56 (PMQSVKSGSQEEASPSSIQSETETVTTKS). Acidic residues predominate over residues 64-80 (EIDDKNDDDSTQSEEEN). Polar residues predominate over residues 97–109 (GASTATGPVTTNT). The stretch at 340 to 385 (SKYVEVESKAQEQDMVDEQNEVKETEAENEKQESKAAYATTLFDIL) forms a coiled coil. A compositionally biased stretch (basic and acidic residues) spans 465 to 485 (FMSKMEEGRKRERTNVTEVKK). A disordered region spans residues 465-550 (FMSKMEEGRK…VTPAAPTETE (86 aa)). A phosphoserine mark is found at S487, S493, and S504. Over residues 493–504 (SEEDGEGEDDKS) the composition is skewed to acidic residues. T507 is subject to Phosphothreonine. Polar residues predominate over residues 513-528 (SLLTPTPILESSSPMT).

In terms of assembly, component of the chromatin-remodeling INO80 complex, at least composed of ARP4, ARP5, ARP8, RVB1, RVB2, TAF14, NHP10, IES1, IES3, IES4, IES6, ACT1, IES2, IES5 and INO80.

It localises to the nucleus. Probably involved in transcription regulation via its interaction with the INO80 complex, a chromatin-remodeling complex. The sequence is that of Ino eighty subunit 1 (IES1) from Saccharomyces cerevisiae (strain ATCC 204508 / S288c) (Baker's yeast).